The following is a 97-amino-acid chain: uncharacterized protein (97 aa).

3 helical membrane-spanning segments follow: residues 5–25 (TLVA…SLSV), 27–47 (MVFV…LICY), and 77–97 (IISI…VFIL).

Its subcellular location is the membrane. This is an uncharacterized protein from Saccharomyces cerevisiae (strain ATCC 204508 / S288c) (Baker's yeast).